The chain runs to 196 residues: Beta-crystallin A4 (196 aa).

An N-acetylthreonine modification is found at T2. The interval 2–11 is N-terminal arm; the sequence is TLQCTKSAGP. Beta/gamma crystallin 'Greek key' domains are found at residues 12 to 51 and 52 to 98; these read WKMVVWDEDGFQGRRHEFTAECPSVLELGFETVRSLKVLS and GAWV…RPAA. The connecting peptide stretch occupies residues 99-104; the sequence is CANHRD. Beta/gamma crystallin 'Greek key' domains follow at residues 105 to 146 and 147 to 195; these read SRLT…HVHS and GAWV…RRIQ.

The protein belongs to the beta/gamma-crystallin family. In terms of assembly, homo/heterodimer, or complexes of higher-order. The structure of beta-crystallin oligomers seems to be stabilized through interactions between the N-terminal arms.

Crystallins are the dominant structural components of the vertebrate eye lens. This is Beta-crystallin A4 (CRYBA4) from Homo sapiens (Human).